The following is a 597-amino-acid chain: Elongation factor 4 (597 aa).

A tr-type G domain is found at 2–184; the sequence is KHIRNFSIIA…NIVSAIPAPE (183 aa). Residues 14–19 and 131–134 contribute to the GTP site; these read DHGKST and NKID.

It belongs to the TRAFAC class translation factor GTPase superfamily. Classic translation factor GTPase family. LepA subfamily.

The protein localises to the cell inner membrane. The catalysed reaction is GTP + H2O = GDP + phosphate + H(+). In terms of biological role, required for accurate and efficient protein synthesis under certain stress conditions. May act as a fidelity factor of the translation reaction, by catalyzing a one-codon backward translocation of tRNAs on improperly translocated ribosomes. Back-translocation proceeds from a post-translocation (POST) complex to a pre-translocation (PRE) complex, thus giving elongation factor G a second chance to translocate the tRNAs correctly. Binds to ribosomes in a GTP-dependent manner. This is Elongation factor 4 from Vibrio campbellii (strain ATCC BAA-1116).